A 239-amino-acid polypeptide reads, in one-letter code: Ribosomal RNA large subunit methyltransferase E (239 aa).

S-adenosyl-L-methionine contacts are provided by Gly88, Trp90, Asp111, Asp127, and Asp151. The active-site Proton acceptor is the Lys191.

The protein belongs to the class I-like SAM-binding methyltransferase superfamily. RNA methyltransferase RlmE family.

It localises to the cytoplasm. The enzyme catalyses uridine(2552) in 23S rRNA + S-adenosyl-L-methionine = 2'-O-methyluridine(2552) in 23S rRNA + S-adenosyl-L-homocysteine + H(+). In terms of biological role, specifically methylates the uridine in position 2552 of 23S rRNA at the 2'-O position of the ribose in the fully assembled 50S ribosomal subunit. The chain is Ribosomal RNA large subunit methyltransferase E from Bartonella bacilliformis (strain ATCC 35685 / KC583 / Herrer 020/F12,63).